The chain runs to 860 residues: Leucine--tRNA ligase (860 aa).

Positions 42-52 match the 'HIGH' region motif; the sequence is PYPSGRLHMGH. A 'KMSKS' region motif is present at residues 619–623; that stretch reads KMSKS. K622 contributes to the ATP binding site.

It belongs to the class-I aminoacyl-tRNA synthetase family.

It is found in the cytoplasm. The enzyme catalyses tRNA(Leu) + L-leucine + ATP = L-leucyl-tRNA(Leu) + AMP + diphosphate. In Escherichia coli O45:K1 (strain S88 / ExPEC), this protein is Leucine--tRNA ligase.